The chain runs to 685 residues: Galactocerebrosidase (685 aa).

The N-terminal stretch at 1–42 (MAEWLLSASRQRRVKAMTAAAGSAGRAAVPFLLCALLAPGGA) is a signal peptide. Position 109 (threonine 109) interacts with substrate. An N-linked (GlcNAc...) asparagine glycan is attached at asparagine 143. The substrate site is built by tryptophan 151 and asparagine 197. Glutamate 198 (proton donor/acceptor) is an active-site residue. Glutamate 274 (nucleophile) is an active-site residue. The cysteines at positions 287 and 394 are disulfide-linked. N-linked (GlcNAc...) asparagine glycosylation occurs at asparagine 379. Arginine 396 is a substrate binding site. N-linked (GlcNAc...) asparagine glycosylation is found at asparagine 403, asparagine 451, asparagine 556, asparagine 559, and asparagine 602.

The protein belongs to the glycosyl hydrolase 59 family.

It localises to the lysosome. The enzyme catalyses a beta-D-galactosyl-(1&lt;-&gt;1')-N-acylsphing-4-enine + H2O = an N-acylsphing-4-enine + D-galactose. It carries out the reaction beta-D-galactosyl-(1&lt;-&gt;1)-sphing-4-enine + H2O = sphing-4-enine + D-galactose. The catalysed reaction is a D-galactosylceramide + H2O = an N-acyl-sphingoid base + D-galactose. In terms of biological role, hydrolyzes the galactose ester bonds of glycolipids such as galactosylceramide and galactosylsphingosine. Enzyme with very low activity responsible for the lysosomal catabolism of galactosylceramide, a major lipid in myelin, kidney and epithelial cells of small intestine and colon. This is Galactocerebrosidase from Macaca mulatta (Rhesus macaque).